The primary structure comprises 355 residues: MYHKRIKEAIEAIKQGEMIIIMDDEDRENEGDLVMAGIFSSPQKINFMAQEARGLICVSITQELAQKLDLPPMVQKNDSNHETAFTISIDAKEAKTGISAFERDMTIRLMCESNTKPSDFVRPGHIFPLIAKEGGVLVRTGHTEASVDICRLAGVAPISVICEIMKKDGTMAGRGDKFLLDFASQHHLKILYVSDIIQYRLNFENLLREITRESAVFMGVECEKITFIDHLEREHIVFGFPHKGSSSNEPKPLIRFHNVRSDLELLQNAQEWNALLKSIECLKEKGGYLVFLNTHSEYANSSKTCGDIKDFGIGAQILKRLGIEDFVLLSSCGGSKGEYNALSGFNLHLVEKIEV.

Positions 1 to 202 are DHBP synthase; that stretch reads MYHKRIKEAI…VSDIIQYRLN (202 aa). D-ribulose 5-phosphate contacts are provided by residues 27–28, D32, 139–143, and E163; these read RE and RTGHT. Residue E28 coordinates Mg(2+). H142 is a binding site for Mg(2+). The segment at 203–355 is GTP cyclohydrolase II-like; it reads FENLLREITR…NLHLVEKIEV (153 aa).

This sequence in the N-terminal section; belongs to the DHBP synthase family. In the C-terminal section; belongs to the GTP cyclohydrolase II family. Requires Mg(2+) as cofactor. The cofactor is Mn(2+).

The catalysed reaction is D-ribulose 5-phosphate = (2S)-2-hydroxy-3-oxobutyl phosphate + formate + H(+). It participates in cofactor biosynthesis; riboflavin biosynthesis; 2-hydroxy-3-oxobutyl phosphate from D-ribulose 5-phosphate: step 1/1. Catalyzes the conversion of D-ribulose 5-phosphate to formate and 3,4-dihydroxy-2-butanone 4-phosphate. This Helicobacter hepaticus (strain ATCC 51449 / 3B1) protein is 3,4-dihydroxy-2-butanone 4-phosphate synthase (ribB).